The following is a 125-amino-acid chain: Ribosome-binding factor A (125 aa).

It belongs to the RbfA family. As to quaternary structure, monomer. Binds 30S ribosomal subunits, but not 50S ribosomal subunits or 70S ribosomes.

The protein localises to the cytoplasm. Its function is as follows. One of several proteins that assist in the late maturation steps of the functional core of the 30S ribosomal subunit. Associates with free 30S ribosomal subunits (but not with 30S subunits that are part of 70S ribosomes or polysomes). Required for efficient processing of 16S rRNA. May interact with the 5'-terminal helix region of 16S rRNA. This chain is Ribosome-binding factor A, found in Xylella fastidiosa (strain M12).